The following is a 682-amino-acid chain: ATP-dependent zinc metalloprotease FtsH (682 aa).

At 1 to 7 (MKQSHKT) the chain is on the cytoplasmic side. A helical membrane pass occupies residues 8-28 (ILLWALLIFLFVMIYNLISDG). Over 29–138 (TSGEETLDTT…YEVKAKEEST (110 aa)) the chain is Periplasmic. Residues 139–159 (FWQSLLISWLPMLLLFALFFF) traverse the membrane as a helical segment. Residues 160 to 682 (FMRQLQAGGG…SGTDPEPEPA (523 aa)) lie on the Cytoplasmic side of the membrane. Position 232 to 239 (232 to 239 (GPPGTGKT)) interacts with ATP. His454 is a Zn(2+) binding site. Glu455 is an active-site residue. Positions 458 and 531 each coordinate Zn(2+). The interval 638 to 682 (LSRPAVVSKPSADAESSVDEDEREARPALFPPLGKSGTDPEPEPA) is disordered.

This sequence in the central section; belongs to the AAA ATPase family. The protein in the C-terminal section; belongs to the peptidase M41 family. As to quaternary structure, homohexamer. Zn(2+) is required as a cofactor.

Its subcellular location is the cell inner membrane. Functionally, acts as a processive, ATP-dependent zinc metallopeptidase for both cytoplasmic and membrane proteins. Plays a role in the quality control of integral membrane proteins. The chain is ATP-dependent zinc metalloprotease FtsH from Haliangium ochraceum (strain DSM 14365 / JCM 11303 / SMP-2).